Reading from the N-terminus, the 637-residue chain is Biosynthetic arginine decarboxylase (637 aa).

N6-(pyridoxal phosphate)lysine is present on K101. 286 to 296 provides a ligand contact to substrate; it reads FDVGGGLAVDY.

This sequence belongs to the Orn/Lys/Arg decarboxylase class-II family. SpeA subfamily. Mg(2+) is required as a cofactor. Pyridoxal 5'-phosphate serves as cofactor.

The enzyme catalyses L-arginine + H(+) = agmatine + CO2. The protein operates within amine and polyamine biosynthesis; agmatine biosynthesis; agmatine from L-arginine: step 1/1. Its function is as follows. Catalyzes the biosynthesis of agmatine from arginine. The sequence is that of Biosynthetic arginine decarboxylase from Shewanella loihica (strain ATCC BAA-1088 / PV-4).